The following is a 349-amino-acid chain: Small ribosomal subunit protein eS6 (349 aa).

The interval 224 to 349 (RRRSRLSSMR…AKKEKKQKKK (126 aa)) is disordered. Composition is skewed to basic and acidic residues over residues 231–251 (SMRD…EKAA) and 260–334 (KKEA…EAAK).

This sequence belongs to the eukaryotic ribosomal protein eS6 family. As to quaternary structure, component of the small ribosomal subunit. Part of the small subunit (SSU) processome, composed of more than 70 proteins and the RNA chaperone small nucleolar RNA (snoRNA) U3. Ribosomal protein S6 is the major substrate of protein kinases in eukaryote ribosomes.

The protein resides in the cytoplasm. Its subcellular location is the nucleus. The protein localises to the nucleolus. Functionally, component of the 40S small ribosomal subunit. Plays an important role in controlling cell growth and proliferation through the selective translation of particular classes of mRNA. Part of the small subunit (SSU) processome, first precursor of the small eukaryotic ribosomal subunit. During the assembly of the SSU processome in the nucleolus, many ribosome biogenesis factors, an RNA chaperone and ribosomal proteins associate with the nascent pre-rRNA and work in concert to generate RNA folding, modifications, rearrangements and cleavage as well as targeted degradation of pre-ribosomal RNA by the RNA exosome. The sequence is that of Small ribosomal subunit protein eS6 (RpS6) from Aedes albopictus (Asian tiger mosquito).